Here is a 119-residue protein sequence, read N- to C-terminus: Divalent-cation tolerance protein CutA (119 aa).

Positions 23, 90, and 91 each coordinate Cu cation.

It belongs to the CutA family. Homotrimer. Cu cation serves as cofactor.

The protein localises to the cytoplasm. Functionally, involved in resistance toward heavy metals. The polypeptide is Divalent-cation tolerance protein CutA (Yersinia pseudotuberculosis serotype O:1b (strain IP 31758)).